A 256-amino-acid chain; its full sequence is Ubiquinone/menaquinone biosynthesis C-methyltransferase UbiE (256 aa).

Residues Thr-79, Asp-100, and 128–129 (DA) contribute to the S-adenosyl-L-methionine site.

Belongs to the class I-like SAM-binding methyltransferase superfamily. MenG/UbiE family.

The catalysed reaction is a 2-demethylmenaquinol + S-adenosyl-L-methionine = a menaquinol + S-adenosyl-L-homocysteine + H(+). It carries out the reaction a 2-methoxy-6-(all-trans-polyprenyl)benzene-1,4-diol + S-adenosyl-L-methionine = a 5-methoxy-2-methyl-3-(all-trans-polyprenyl)benzene-1,4-diol + S-adenosyl-L-homocysteine + H(+). The protein operates within quinol/quinone metabolism; menaquinone biosynthesis; menaquinol from 1,4-dihydroxy-2-naphthoate: step 2/2. It participates in cofactor biosynthesis; ubiquinone biosynthesis. Methyltransferase required for the conversion of demethylmenaquinol (DMKH2) to menaquinol (MKH2) and the conversion of 2-polyprenyl-6-methoxy-1,4-benzoquinol (DDMQH2) to 2-polyprenyl-3-methyl-6-methoxy-1,4-benzoquinol (DMQH2). This is Ubiquinone/menaquinone biosynthesis C-methyltransferase UbiE from Pseudomonas savastanoi pv. phaseolicola (strain 1448A / Race 6) (Pseudomonas syringae pv. phaseolicola (strain 1448A / Race 6)).